We begin with the raw amino-acid sequence, 294 residues long: Glyceraldehyde-3-phosphate dehydrogenase (294 aa).

3 residues coordinate NAD(+): Asp19, Arg63, and Thr105. Residues 134 to 136 (SCT), Thr165, 194 to 195 (TG), and Arg217 contribute to the D-glyceraldehyde 3-phosphate site. Cys135 acts as the Nucleophile in catalysis.

Belongs to the glyceraldehyde-3-phosphate dehydrogenase family. In terms of assembly, homotetramer.

It localises to the cytoplasm. It carries out the reaction D-glyceraldehyde 3-phosphate + phosphate + NAD(+) = (2R)-3-phospho-glyceroyl phosphate + NADH + H(+). It participates in carbohydrate degradation; glycolysis; pyruvate from D-glyceraldehyde 3-phosphate: step 1/5. Functionally, catalyzes the oxidative phosphorylation of glyceraldehyde 3-phosphate (G3P) to 1,3-bisphosphoglycerate (BPG) using the cofactor NAD. The first reaction step involves the formation of a hemiacetal intermediate between G3P and a cysteine residue, and this hemiacetal intermediate is then oxidized to a thioester, with concomitant reduction of NAD to NADH. The reduced NADH is then exchanged with the second NAD, and the thioester is attacked by a nucleophilic inorganic phosphate to produce BPG. The chain is Glyceraldehyde-3-phosphate dehydrogenase (gap) from Shimwellia blattae (Escherichia blattae).